The sequence spans 78 residues: Gas vesicle protein G (78 aa).

The protein belongs to the gas vesicle GvpG family.

The protein localises to the gas vesicle. Functionally, might be a minor component of the gas vesicle involved in nucleating their formation. Gas vesicles are hollow, gas filled proteinaceous nanostructures found in some microorganisms. It is not clear what function gas vesicles perform in soil bacteria. In Streptomyces sp. (strain CB03234), this protein is Gas vesicle protein G.